The chain runs to 787 residues: LPS-assembly protein LptD (787 aa).

The tract at residues 1 to 78 (MAAGLPPLVV…AAGAAPAESG (78 aa)) is disordered. Positions 59 to 78 (LPPVGTPAEPAAGAAPAESG) are enriched in low complexity.

It belongs to the LptD family. Component of the lipopolysaccharide transport and assembly complex. Interacts with LptE and LptA.

In terms of biological role, together with LptE, is involved in the assembly of lipopolysaccharide (LPS) at the surface of the outer membrane. The protein is LPS-assembly protein LptD of Aromatoleum aromaticum (strain DSM 19018 / LMG 30748 / EbN1) (Azoarcus sp. (strain EbN1)).